Reading from the N-terminus, the 215-residue chain is uncharacterized protein (215 aa).

Helical transmembrane passes span 9–29 (WTFY…TIEG), 50–70 (LTVG…TSLF), 77–97 (IGAL…NFIL), 107–127 (IIVF…YVSA), and 160–180 (ILFA…LTAI).

The protein resides in the cell membrane. This is an uncharacterized protein from Bacillus subtilis (strain 168).